The chain runs to 328 residues: Cell division protein ZipA (328 aa).

The Periplasmic portion of the chain corresponds to 1 to 4; sequence MDLN. Residues 5–25 traverse the membrane as a helical segment; it reads TILIIVGIVALVALIVHGLWS. At 26–328 the chain is on the cytoplasmic side; it reads NRREKSKYFD…NAEQAYLARV (303 aa). Positions 43-82 are disordered; the sequence is TSLTSRSHTQEEMAQPNNISPNTYVENGHTPIPQPTTEKV. Polar residues predominate over residues 57 to 67; it reads QPNNISPNTYV.

The protein belongs to the ZipA family. In terms of assembly, interacts with FtsZ via their C-terminal domains.

The protein resides in the cell inner membrane. Essential cell division protein that stabilizes the FtsZ protofilaments by cross-linking them and that serves as a cytoplasmic membrane anchor for the Z ring. Also required for the recruitment to the septal ring of downstream cell division proteins. This chain is Cell division protein ZipA, found in Haemophilus influenzae (strain PittEE).